The chain runs to 308 residues: Ribosomal RNA large subunit methyltransferase F (308 aa).

The protein belongs to the methyltransferase superfamily. METTL16/RlmF family.

It localises to the cytoplasm. It catalyses the reaction adenosine(1618) in 23S rRNA + S-adenosyl-L-methionine = N(6)-methyladenosine(1618) in 23S rRNA + S-adenosyl-L-homocysteine + H(+). Specifically methylates the adenine in position 1618 of 23S rRNA. This is Ribosomal RNA large subunit methyltransferase F from Salmonella paratyphi A (strain ATCC 9150 / SARB42).